Here is a 40-residue protein sequence, read N- to C-terminus: Potassium channel toxin alpha-KTx 12.3 (40 aa).

Cystine bridges form between C2/C5, C10/C31, C16/C36, and C20/C38.

In terms of tissue distribution, expressed by the venom gland.

The protein resides in the secreted. Its function is as follows. Inhibits high conductance calcium-activated potassium channels (KCNMA). Inhibits Shaker B potassium channels. The protein is Potassium channel toxin alpha-KTx 12.3 of Tityus costatus (Brazilian scorpion).